The following is a 4306-amino-acid chain: Cytoplasmic dynein 2 heavy chain 1 (4306 aa).

The tract at residues 1-1650 (MAGSLGDVRK…YVQMVDSELQ (1650 aa)) is stem. 145–152 (LGIVLRKS) provides a ligand contact to ATP. A coiled-coil region spans residues 669–696 (KELEGYIQKLQNAAERLATENRRLRKWH). AAA stretches follow at residues 1651 to 1875 (YTYE…VLRG), 1941 to 2161 (SALK…KQND), 2249 to 2505 (LTAD…WVLG), and 2617 to 2862 (HYGR…ESCK). ATP-binding positions include 1689–1696 (GPAGTGKT), 1979–1986 (GPSGAGKS), 2291–2298 (GPEGCGKG), and 2655–2662 (GRSGVGRR). Residues 2880-3168 (AISSSKKKEL…AEVSKAQETI (289 aa)) form a stalk region. Coiled-coil stretches lie at residues 2896-2981 (LQAG…KEVQ), 3108-3199 (LETE…LATL), and 3407-3441 (IQHEKPDLEEQKTKLLQQEEDKKIQLARLEESLLE). 2 AAA regions span residues 3243-3472 (LCTE…LIQD) and 3689-3904 (MALF…VIDR).

This sequence belongs to the dynein heavy chain family. The cytoplasmic dynein complex 2 is probably composed by a heavy chain DYNC2H1 homodimer and a number of DYNC2LI1 light intermediate chains. Detected in brain, lung, spleen and kidney (at protein level). Enriched in the ependymal layer lining the lateral ventricles (at protein level).

The protein resides in the cytoplasm. It localises to the cytoskeleton. Its subcellular location is the cilium axoneme. It is found in the cell membrane. In terms of biological role, may function as a motor for intraflagellar retrograde transport. Functions in cilia biogenesis. According to PubMed:8666668, it may play a role in transport between endoplasmic reticulum and Golgi or organization of the Golgi in cells. The protein is Cytoplasmic dynein 2 heavy chain 1 (Dync2h1) of Mus musculus (Mouse).